The sequence spans 158 residues: Transcription elongation factor GreA (158 aa).

Positions 46–66 form a coiled coil; the sequence is AEYEAAKERQGFIEGRISELE.

This sequence belongs to the GreA/GreB family.

Its function is as follows. Necessary for efficient RNA polymerase transcription elongation past template-encoded arresting sites. The arresting sites in DNA have the property of trapping a certain fraction of elongating RNA polymerases that pass through, resulting in locked ternary complexes. Cleavage of the nascent transcript by cleavage factors such as GreA or GreB allows the resumption of elongation from the new 3'terminus. GreA releases sequences of 2 to 3 nucleotides. In Neisseria meningitidis serogroup B (strain ATCC BAA-335 / MC58), this protein is Transcription elongation factor GreA.